We begin with the raw amino-acid sequence, 514 residues long: Chromosomal replication initiator protein DnaA (514 aa).

Residues M1 to I90 are domain I, interacts with DnaA modulators. Residues V91–S177 form a domain II region. The interval Y178 to S394 is domain III, AAA+ region. G222, G224, K225, and T226 together coordinate ATP. Positions H395–T514 are domain IV, binds dsDNA.

This sequence belongs to the DnaA family. Oligomerizes as a right-handed, spiral filament on DNA at oriC.

Its subcellular location is the cytoplasm. Its function is as follows. Plays an essential role in the initiation and regulation of chromosomal replication. ATP-DnaA binds to the origin of replication (oriC) to initiate formation of the DNA replication initiation complex once per cell cycle. Binds the DnaA box (a 9 base pair repeat at the origin) and separates the double-stranded (ds)DNA. Forms a right-handed helical filament on oriC DNA; dsDNA binds to the exterior of the filament while single-stranded (ss)DNA is stabiized in the filament's interior. The ATP-DnaA-oriC complex binds and stabilizes one strand of the AT-rich DNA unwinding element (DUE), permitting loading of DNA polymerase. After initiation quickly degrades to an ADP-DnaA complex that is not apt for DNA replication. Binds acidic phospholipids. The protein is Chromosomal replication initiator protein DnaA of Pseudomonas aeruginosa (strain LESB58).